We begin with the raw amino-acid sequence, 333 residues long: Fructose-1,6-bisphosphatase class 1 1 (333 aa).

4 residues coordinate Mg(2+): Glu-81, Asp-100, Leu-102, and Asp-103. Residues 103–106 and Asn-191 contribute to the substrate site; that span reads DGSS. Glu-263 contacts Mg(2+).

Belongs to the FBPase class 1 family. In terms of assembly, homotetramer. Mg(2+) is required as a cofactor.

It is found in the cytoplasm. It catalyses the reaction beta-D-fructose 1,6-bisphosphate + H2O = beta-D-fructose 6-phosphate + phosphate. The protein operates within carbohydrate biosynthesis; gluconeogenesis. Fructose-1,6-bisphosphatase II is not light-activated. The polypeptide is Fructose-1,6-bisphosphatase class 1 1 (Cereibacter sphaeroides (Rhodobacter sphaeroides)).